We begin with the raw amino-acid sequence, 469 residues long: Adenosylhomocysteinase (469 aa).

Substrate contacts are provided by threonine 60, aspartate 135, and glutamate 195. Residue 196-198 (TTT) participates in NAD(+) binding. Residues lysine 225 and aspartate 229 each contribute to the substrate site. Residues asparagine 230, 259 to 264 (GYGDVG), glutamate 282, asparagine 317, 338 to 340 (IGH), and asparagine 383 contribute to the NAD(+) site.

This sequence belongs to the adenosylhomocysteinase family. NAD(+) is required as a cofactor.

It localises to the cytoplasm. It carries out the reaction S-adenosyl-L-homocysteine + H2O = L-homocysteine + adenosine. It functions in the pathway amino-acid biosynthesis; L-homocysteine biosynthesis; L-homocysteine from S-adenosyl-L-homocysteine: step 1/1. In terms of biological role, may play a key role in the regulation of the intracellular concentration of adenosylhomocysteine. In Maricaulis maris (strain MCS10) (Caulobacter maris), this protein is Adenosylhomocysteinase.